The following is a 240-amino-acid chain: Homeobox protein notochord (240 aa).

Positions 1 to 13 (MSSPAPSGTQVQP) are enriched in polar residues. Disordered stretches follow at residues 1 to 21 (MSSP…PCPG) and 208 to 240 (QKLK…GIGS). The homeobox DNA-binding region spans 149–208 (TKRVRTTFNLQQLQELEKVFAKQHNLVGKERAQLAARLHLTENQVRIWFQNRRVKYQKQQ). The span at 213–225 (PSSSVMEEPSSSS) shows a compositional bias: low complexity.

It is found in the nucleus. Its function is as follows. Transcription factor that controls node morphogenesis. Acts downstream of both FOXA2 and Brachyury (T) during notochord development. Is essential for cilia formation in the posterior notochord (PNC) and for left-right patterning; acts upstream of FOXJ1 and RFX3 in this process and is required for the expression of various components important for axonemal assembly and function. Plays a role in regulating axial versus paraxial cell fate. Activates the transcription of ciliary proteins C11orf97 homolog, FAM183B and SPACA9 in the embryonic ventral node. This Mus musculus (Mouse) protein is Homeobox protein notochord (Noto).